Reading from the N-terminus, the 327-residue chain is uncharacterized protein (327 aa).

Residues 266-285 (IGLLAAGSVALTSLCHLLCY) form a helical membrane-spanning segment. The segment at 297 to 327 (EEENEAAEETAAGEASAVAAAAVSEEEQQRE) is disordered. Residues 305 to 319 (ETAAGEASAVAAAAV) are compositionally biased toward low complexity.

Belongs to the HHV-5 UL14 protein family.

The protein localises to the host membrane. This is an uncharacterized protein from Human cytomegalovirus (strain Merlin) (HHV-5).